The following is a 65-amino-acid chain: Small ribosomal subunit protein eS27 (65 aa).

Zn(2+)-binding residues include Cys-21, Cys-24, Cys-40, and Cys-43. The C4-type zinc finger occupies 21–43 (CKDCGNVQVVFARPSSVVTCNIC).

Belongs to the eukaryotic ribosomal protein eS27 family. As to quaternary structure, part of the 30S ribosomal subunit. Zn(2+) is required as a cofactor.

The protein is Small ribosomal subunit protein eS27 of Thermoplasma volcanium (strain ATCC 51530 / DSM 4299 / JCM 9571 / NBRC 15438 / GSS1).